Reading from the N-terminus, the 642-residue chain is Threonine--tRNA ligase (642 aa).

In terms of domain architecture, TGS spans 1–61 (MPVITLPDGS…DTDSELSIIT (61 aa)). The tract at residues 243–534 (DHRKIGKQLD…LIEEYAGKFP (292 aa)) is catalytic. Cys-334, His-385, and His-511 together coordinate Zn(2+).

The protein belongs to the class-II aminoacyl-tRNA synthetase family. As to quaternary structure, homodimer. Requires Zn(2+) as cofactor.

It localises to the cytoplasm. The enzyme catalyses tRNA(Thr) + L-threonine + ATP = L-threonyl-tRNA(Thr) + AMP + diphosphate + H(+). In terms of biological role, catalyzes the attachment of threonine to tRNA(Thr) in a two-step reaction: L-threonine is first activated by ATP to form Thr-AMP and then transferred to the acceptor end of tRNA(Thr). Also edits incorrectly charged L-seryl-tRNA(Thr). This is Threonine--tRNA ligase from Shewanella sediminis (strain HAW-EB3).